A 236-amino-acid polypeptide reads, in one-letter code: Small ribosomal subunit protein uS2c (236 aa).

It belongs to the universal ribosomal protein uS2 family.

Its subcellular location is the plastid. The polypeptide is Small ribosomal subunit protein uS2c (rps2) (Cuscuta gronovii (Common dodder)).